Reading from the N-terminus, the 667-residue chain is Sorting nexin mvp1 (667 aa).

The interval Ala-221–Arg-268 is disordered. Over residues Leu-224–Ser-236 the composition is skewed to polar residues. One can recognise a PX domain in the interval Thr-279–Phe-398. A 1,2-diacyl-sn-glycero-3-phospho-(1D-myo-inositol-3-phosphate) is bound by residues Arg-320, Ser-322, and Lys-346. Positions Ala-574 to Ala-594 are disordered.

Belongs to the sorting nexin family. In terms of assembly, homodimer. Forms an autoinhibited tetramer consisting of 2 homodimers that self-interact, wherein the membrane-interacting BAR surfaces are sequestered and the PX lipid-binding sites are occluded. Interacts with Vps1.

The protein resides in the cytoplasm. Its subcellular location is the endosome membrane. Functionally, required for vacuolar protein sorting. Component of the retromer-mediated endosome-to-Golgi retrograde pathway. Required for efficient cargo export from the endosome, promoting Vps1-mediated fission of retromer-coated tubules that bud from the endosome. The sequence is that of Sorting nexin mvp1 (mvp1) from Schizosaccharomyces pombe (strain 972 / ATCC 24843) (Fission yeast).